The following is a 134-amino-acid chain: Large-conductance mechanosensitive channel (134 aa).

The next 2 membrane-spanning stretches (helical) occupy residues 16-36 (VVDMAVGIIIGVAFGKIVSSF) and 76-96 (GVFLQAIFDFIIIAFAIFIAV).

Belongs to the MscL family. As to quaternary structure, homopentamer.

The protein localises to the cell inner membrane. Functionally, channel that opens in response to stretch forces in the membrane lipid bilayer. May participate in the regulation of osmotic pressure changes within the cell. The polypeptide is Large-conductance mechanosensitive channel (Thioalkalivibrio sulfidiphilus (strain HL-EbGR7)).